Reading from the N-terminus, the 60-residue chain is Large ribosomal subunit protein uL30 (60 aa).

Belongs to the universal ribosomal protein uL30 family. In terms of assembly, part of the 50S ribosomal subunit.

This is Large ribosomal subunit protein uL30 from Cupriavidus metallidurans (strain ATCC 43123 / DSM 2839 / NBRC 102507 / CH34) (Ralstonia metallidurans).